A 163-amino-acid polypeptide reads, in one-letter code: Crossover junction endodeoxyribonuclease RuvC (163 aa).

Catalysis depends on residues D9, E76, and D148. The Mg(2+) site is built by D9, E76, and D148.

This sequence belongs to the RuvC family. Homodimer which binds Holliday junction (HJ) DNA. The HJ becomes 2-fold symmetrical on binding to RuvC with unstacked arms; it has a different conformation from HJ DNA in complex with RuvA. In the full resolvosome a probable DNA-RuvA(4)-RuvB(12)-RuvC(2) complex forms which resolves the HJ. Mg(2+) is required as a cofactor.

The protein resides in the cytoplasm. It catalyses the reaction Endonucleolytic cleavage at a junction such as a reciprocal single-stranded crossover between two homologous DNA duplexes (Holliday junction).. In terms of biological role, the RuvA-RuvB-RuvC complex processes Holliday junction (HJ) DNA during genetic recombination and DNA repair. Endonuclease that resolves HJ intermediates. Cleaves cruciform DNA by making single-stranded nicks across the HJ at symmetrical positions within the homologous arms, yielding a 5'-phosphate and a 3'-hydroxyl group; requires a central core of homology in the junction. The consensus cleavage sequence is 5'-(A/T)TT(C/G)-3'. Cleavage occurs on the 3'-side of the TT dinucleotide at the point of strand exchange. HJ branch migration catalyzed by RuvA-RuvB allows RuvC to scan DNA until it finds its consensus sequence, where it cleaves and resolves the cruciform DNA. This is Crossover junction endodeoxyribonuclease RuvC from Trichormus variabilis (strain ATCC 29413 / PCC 7937) (Anabaena variabilis).